The primary structure comprises 72 residues: DNA-directed RNA polymerase subunit omega (72 aa).

This sequence belongs to the RNA polymerase subunit omega family. As to quaternary structure, the RNAP catalytic core consists of 2 alpha, 1 beta, 1 beta' and 1 omega subunit. When a sigma factor is associated with the core the holoenzyme is formed, which can initiate transcription.

It carries out the reaction RNA(n) + a ribonucleoside 5'-triphosphate = RNA(n+1) + diphosphate. Its function is as follows. Promotes RNA polymerase assembly. Latches the N- and C-terminal regions of the beta' subunit thereby facilitating its interaction with the beta and alpha subunits. The polypeptide is DNA-directed RNA polymerase subunit omega (Campylobacter lari (strain RM2100 / D67 / ATCC BAA-1060)).